Consider the following 342-residue polypeptide: S-adenosylmethionine:tRNA ribosyltransferase-isomerase (342 aa).

It belongs to the QueA family. As to quaternary structure, monomer.

The protein resides in the cytoplasm. The catalysed reaction is 7-aminomethyl-7-carbaguanosine(34) in tRNA + S-adenosyl-L-methionine = epoxyqueuosine(34) in tRNA + adenine + L-methionine + 2 H(+). Its pathway is tRNA modification; tRNA-queuosine biosynthesis. In terms of biological role, transfers and isomerizes the ribose moiety from AdoMet to the 7-aminomethyl group of 7-deazaguanine (preQ1-tRNA) to give epoxyqueuosine (oQ-tRNA). This Campylobacter jejuni (strain RM1221) protein is S-adenosylmethionine:tRNA ribosyltransferase-isomerase.